The chain runs to 290 residues: Fructose-1,6-bisphosphatase class 1 (290 aa).

Mg(2+) contacts are provided by Glu78, Asp96, Leu98, and Asp99. Residues 99-102 (DGSS), Tyr201, and Lys226 each bind substrate. Position 232 (Glu232) interacts with Mg(2+).

The protein belongs to the FBPase class 1 family. Homotetramer. It depends on Mg(2+) as a cofactor.

The protein resides in the cytoplasm. The enzyme catalyses beta-D-fructose 1,6-bisphosphate + H2O = beta-D-fructose 6-phosphate + phosphate. It participates in carbohydrate biosynthesis; gluconeogenesis. In Helicobacter acinonychis (strain Sheeba), this protein is Fructose-1,6-bisphosphatase class 1.